Here is a 406-residue protein sequence, read N- to C-terminus: Serine/threonine transporter SstT (406 aa).

The next 9 helical transmembrane spans lie at 21 to 41 (LIIGIMLALWIPDIAAPVAIL), 45 to 65 (FVGALKAVAPVLVLILVMGAI), 79 to 99 (ILILYLLGTFLAGVTAVIASF), 138 to 158 (ALMNANYIGILSWAILLGLAL), 179 to 199 (VVKWVINLAPLGILGLVFDSI), 213 to 233 (LLLLLVGCMVFVALIINPLIV), 285 to 305 (ISIPLGATINMAGAAVTIAVL), 313 to 333 (LGITVDIPTAIILSVLSAIAA), and 360 to 380 (IAMQVVGVGFIIGVVQDSCET).

This sequence belongs to the dicarboxylate/amino acid:cation symporter (DAACS) (TC 2.A.23) family.

The protein resides in the cell membrane. The catalysed reaction is L-serine(in) + Na(+)(in) = L-serine(out) + Na(+)(out). The enzyme catalyses L-threonine(in) + Na(+)(in) = L-threonine(out) + Na(+)(out). Involved in the import of serine and threonine into the cell, with the concomitant import of sodium (symport system). The protein is Serine/threonine transporter SstT of Desulfitobacterium hafniense (strain Y51).